The chain runs to 571 residues: Cilia- and flagella-associated protein 52 (571 aa).

WD repeat units lie at residues 62–106 (GHGN…LLAR), 109–150 (LHKG…AICG), 156–195 (LNVGNATNVIFSRCRDEMFVTAGNGTIRVWELDLPNRKIW), 288–327 (QSQGGITSITLRGEGHQFFVGTEESHIYRVSFTDFKETLI), 330–364 (CHFEAVEDIVFPFGTAELFATCAKKDIRVWHTSSN), 366–405 (AHRIGVTAIATTSDCKRVISGGGEGEVRVWQIGCQTQKLE), 410–449 (EHKSSVSCIRVKKNNEECVTASTDGTCIIWDLVRLRRNQM), 451–490 (LANTLFQCVCYHPEEFQIITSGTDRKIAYWEVFDGTVIRE), 494–533 (SLSGSINGMDITQEGVHFVTGGNDHLVKVWDYNEGEVTHV), and 536–571 (GHSGNITRIRISPGNQYIVSVSADGAILRWKYPYTS).

Belongs to the CFAP52 family. Microtubule inner protein component of sperm flagellar doublet microtubules. Interacts with BRCA2. Interacts with the CCT chaperonin complex. Interacts with HSP70. Interacts with AK8. Interacts with CFAP45. Interacts with DNAI1. Interacts with IQDC.

It is found in the cytoplasm. The protein localises to the cytoskeleton. Its subcellular location is the cilium axoneme. It localises to the flagellum axoneme. Microtubule inner protein (MIP) part of the dynein-decorated doublet microtubules (DMTs) in cilia axoneme. Important for proper ciliary and flagellar beating. May act in cooperation with CFAP45 and axonemal dynein subunit DNAH11. May play a role in cell growth and/or survival. This Macaca fascicularis (Crab-eating macaque) protein is Cilia- and flagella-associated protein 52.